Reading from the N-terminus, the 331-residue chain is 4-hydroxythreonine-4-phosphate dehydrogenase (331 aa).

Residues His137 and Thr138 each contribute to the substrate site. 3 residues coordinate a divalent metal cation: His167, His212, and His267. Residues Lys275, Asn284, and Arg293 each contribute to the substrate site.

The protein belongs to the PdxA family. As to quaternary structure, homodimer. The cofactor is Zn(2+). Requires Mg(2+) as cofactor. Co(2+) is required as a cofactor.

The protein resides in the cytoplasm. The enzyme catalyses 4-(phosphooxy)-L-threonine + NAD(+) = 3-amino-2-oxopropyl phosphate + CO2 + NADH. It functions in the pathway cofactor biosynthesis; pyridoxine 5'-phosphate biosynthesis; pyridoxine 5'-phosphate from D-erythrose 4-phosphate: step 4/5. Functionally, catalyzes the NAD(P)-dependent oxidation of 4-(phosphooxy)-L-threonine (HTP) into 2-amino-3-oxo-4-(phosphooxy)butyric acid which spontaneously decarboxylates to form 3-amino-2-oxopropyl phosphate (AHAP). This Yersinia pseudotuberculosis serotype I (strain IP32953) protein is 4-hydroxythreonine-4-phosphate dehydrogenase.